The primary structure comprises 306 residues: Probable rRNA-processing protein EBP2 (306 aa).

The residue at position 1 (Met-1) is an N-acetylmethionine. 3 disordered regions span residues 1–20, 75–103, and 150–169; these read MDTPPLSESDSESDACLASD, GPVPEVSETQPTPQNQDQKKGVNPEDDFQ, and IRQKLQTKQAAMEKSEKAKQ. Thr-3 bears the Phosphothreonine mark. Phosphoserine is present on residues Ser-7, Ser-9, Ser-11, and Ser-13. Positions 81–90 are enriched in polar residues; the sequence is SETQPTPQNQ. The span at 91–103 shows a compositional bias: basic and acidic residues; the sequence is DQKKGVNPEDDFQ. Lys-93 is covalently cross-linked (Glycyl lysine isopeptide (Lys-Gly) (interchain with G-Cter in SUMO2)). Positions 135 to 171 form a coiled coil; the sequence is DYFAEMAKSDQQMQKIRQKLQTKQAAMEKSEKAKQLR. Glycyl lysine isopeptide (Lys-Gly) (interchain with G-Cter in SUMO2) cross-links involve residues Lys-179 and Lys-218. Basic and acidic residues predominate over residues 213–224; the sequence is LEGDQKPVERSA. Residues 213–306 form a disordered region; that stretch reads LEGDQKPVER…ARQKLKSKAR (94 aa). Phosphoserine occurs at positions 264 and 270. Residues 274 to 306 are compositionally biased toward basic residues; that stretch reads KVAHGKGSRRPGKKGANKRPGKRARQKLKSKAR.

Belongs to the EBP2 family. In terms of assembly, interacts with WDR46.

The protein localises to the nucleus. Its subcellular location is the nucleolus. Its function is as follows. Required for the processing of the 27S pre-rRNA. This Mus musculus (Mouse) protein is Probable rRNA-processing protein EBP2 (Ebna1bp2).